The primary structure comprises 386 residues: Putative 8-amino-7-oxononanoate synthase (386 aa).

R26 is a substrate binding site. 113–114 (GY) is a binding site for pyridoxal 5'-phosphate. Residue H138 coordinates substrate. Residues S186, 211 to 214 (DDAH), and 240 to 243 (TLSK) each bind pyridoxal 5'-phosphate. K243 carries the N6-(pyridoxal phosphate)lysine modification. A substrate-binding site is contributed by T352.

It belongs to the class-II pyridoxal-phosphate-dependent aminotransferase family. BioF subfamily. As to quaternary structure, homodimer. It depends on pyridoxal 5'-phosphate as a cofactor.

The enzyme catalyses 6-carboxyhexanoyl-[ACP] + L-alanine + H(+) = (8S)-8-amino-7-oxononanoate + holo-[ACP] + CO2. The protein operates within cofactor biosynthesis; biotin biosynthesis. Its function is as follows. Catalyzes the decarboxylative condensation of pimeloyl-[acyl-carrier protein] and L-alanine to produce 8-amino-7-oxononanoate (AON), [acyl-carrier protein], and carbon dioxide. This is Putative 8-amino-7-oxononanoate synthase (bioF) from Phenylobacterium zucineum (strain HLK1).